The primary structure comprises 305 residues: MADINAYEGPAEAGFGDYVALLKPRVMSLVVFTAFVGLWIAPQPVNPFVAFCAVLFIALGGGASGALNMWYDADIDAVMRRTAGRPVPSGRVTSQEALAVGIALSGLSVMMLGLAANWFAAGFLAFTIFFYAVVYTIWLKRSTPQNIVIGGAAGAFPPMIGWACATGGIGIESLLMFALIFFWTPPHFWALALFMKDDYSKAGVPMLTVTHGRKVTRCHIFAYTLVLAPFALWLGFTSVGGPLYLAVSVVLNALFIAGGWQILRRSEDQAQADGYRVEKRYFRLSLYYTFLHFLALLVQHWVGGW.

The next 9 helical transmembrane spans lie at 26–46, 47–67, 98–118, 119–139, 147–167, 174–194, 220–240, 243–263, and 284–304; these read VMSL…QPVN, PFVA…SGAL, LAVG…AANW, FAAG…TIWL, IVIG…CATG, LLMF…LALF, IFAY…TSVG, LYLA…WQIL, and LSLY…WVGG.

This sequence belongs to the UbiA prenyltransferase family. Protoheme IX farnesyltransferase subfamily. In terms of assembly, interacts with CtaA.

The protein localises to the cell inner membrane. It catalyses the reaction heme b + (2E,6E)-farnesyl diphosphate + H2O = Fe(II)-heme o + diphosphate. The protein operates within porphyrin-containing compound metabolism; heme O biosynthesis; heme O from protoheme: step 1/1. Converts heme B (protoheme IX) to heme O by substitution of the vinyl group on carbon 2 of heme B porphyrin ring with a hydroxyethyl farnesyl side group. This Paracoccus denitrificans (strain Pd 1222) protein is Protoheme IX farnesyltransferase.